The following is a 152-amino-acid chain: Deoxyuridine 5'-triphosphate nucleotidohydrolase (152 aa).

Substrate contacts are provided by residues 71–73 (RSG), asparagine 84, 88–90 (LID), and methionine 98.

It belongs to the dUTPase family. Mg(2+) is required as a cofactor.

The enzyme catalyses dUTP + H2O = dUMP + diphosphate + H(+). It participates in pyrimidine metabolism; dUMP biosynthesis; dUMP from dCTP (dUTP route): step 2/2. This enzyme is involved in nucleotide metabolism: it produces dUMP, the immediate precursor of thymidine nucleotides and it decreases the intracellular concentration of dUTP so that uracil cannot be incorporated into DNA. In Shewanella sp. (strain ANA-3), this protein is Deoxyuridine 5'-triphosphate nucleotidohydrolase.